The sequence spans 481 residues: Vanillin dehydrogenase (481 aa).

228-233 serves as a coordination point for NAD(+); the sequence is GSTHVG. Residues glutamate 250 and cysteine 284 contribute to the active site.

Belongs to the aldehyde dehydrogenase family.

It catalyses the reaction vanillin + NAD(+) + H2O = vanillate + NADH + 2 H(+). In terms of biological role, catalyzes the NAD-dependent oxidation of vanillin to vanillic acid. In Pseudomonas sp. (strain HR199 / DSM 7063), this protein is Vanillin dehydrogenase (vdh).